The following is a 435-amino-acid chain: MVLPVVAIVGQPNVGKSTLFNRIINQRLAIVEDKPGVTRDRNYAQAEWMGHKFDLIDTGGITWEGGKIEDEIRAQAEIAIEEADVIVMLTNVVNHVTDLDERIARLLYRTKKPVILAVNKADNPEQRNDIYDFYSLGLGDPIPVSSSHGTGIGDLLDEIVNDFPAEKDSEADDVISFSMIGRPNVGKSSLVNKLLGEDRVIVANEEGTTRDAVDTPFTKDGIKFKVVDTAGIRRRGKVYEKTEKYSVLRAMSAIERSDVVLLVLDASTGIREQDKHVAGYAHEAGRGIIIVVNKWDLPEKNSTSAKEFEREIRSEFQYLDYAPILFVSAKTGQRIDQIPSMVKEVYDNQNQRIQSSVLNDLLLEASKLVPTPMIKGKRLRVYYMTQVSTNPPTFVVFVNDPELMHFSYERFLINQLRQNFDFTGTPIKILPRKRK.

2 consecutive EngA-type G domains span residues 4 to 167 (PVVA…PAEK) and 175 to 350 (ISFS…DNQN). GTP-binding positions include 10-17 (GQPNVGKS), 57-61 (DTGGI), 119-122 (NKAD), 181-188 (GRPNVGKS), 228-232 (DTAGI), and 293-296 (NKWD). The 85-residue stretch at 351–435 (QRIQSSVLND…PIKILPRKRK (85 aa)) folds into the KH-like domain.

This sequence belongs to the TRAFAC class TrmE-Era-EngA-EngB-Septin-like GTPase superfamily. EngA (Der) GTPase family. Associates with the 50S ribosomal subunit.

GTPase that plays an essential role in the late steps of ribosome biogenesis. The protein is GTPase Der of Lactobacillus acidophilus (strain ATCC 700396 / NCK56 / N2 / NCFM).